Consider the following 419-residue polypeptide: Transcription termination factor Rho (419 aa).

The region spanning 48–123 (EISGDGVLEI…LKVDTINFDR (76 aa)) is the Rho RNA-BD domain. 3 RNA-binding regions span residues 61–66 (GFGFLR), 78–80 (DIY), and 108–110 (ERY). Residues 169 to 174 (GKGQRG), 181 to 186 (KAGKTI), and R212 contribute to the ATP site. The segment at 284–288 (VLTGG) is RNA-binding 2.

It belongs to the Rho family. In terms of assembly, homohexamer. The homohexamer assembles into an open ring structure.

Facilitates transcription termination by a mechanism that involves Rho binding to the nascent RNA, activation of Rho's RNA-dependent ATPase activity, and release of the mRNA from the DNA template. This Pseudomonas fluorescens biotype C protein is Transcription termination factor Rho.